The chain runs to 1175 residues: Pyruvate carboxylase (1175 aa).

A Biotin carboxylation domain is found at asparagine 22–serine 474. ATP-binding residues include lysine 140, glutamate 224, and histidine 259. Positions arginine 144–alanine 341 constitute an ATP-grasp domain. Arginine 316 is an active-site residue. The Pyruvate carboxyltransferase domain occupies cysteine 561 to arginine 828. Substrate contacts are provided by residues arginine 569 to glutamine 573 and arginine 642. Residue aspartate 570 participates in a divalent metal cation binding. Positions 738, 768, and 770 each coordinate a divalent metal cation. N6-carboxylysine is present on lysine 738. Threonine 902 serves as a coordination point for substrate. The region spanning lysine 1099 to threonine 1174 is the Biotinyl-binding domain. Lysine 1140 is modified (N6-biotinyllysine).

Biotin is required as a cofactor. It depends on Zn(2+) as a cofactor.

It is found in the cytoplasm. The catalysed reaction is hydrogencarbonate + pyruvate + ATP = oxaloacetate + ADP + phosphate + H(+). It functions in the pathway carbohydrate biosynthesis; gluconeogenesis. Pyruvate carboxylase catalyzes a 2-step reaction, involving the ATP-dependent carboxylation of the covalently attached biotin in the first step and the transfer of the carboxyl group to pyruvate in the second. This chain is Pyruvate carboxylase (PYC), found in Pichia angusta (Yeast).